An 87-amino-acid polypeptide reads, in one-letter code: Small ribosomal subunit protein uS17 (87 aa).

The protein belongs to the universal ribosomal protein uS17 family. As to quaternary structure, part of the 30S ribosomal subunit.

One of the primary rRNA binding proteins, it binds specifically to the 5'-end of 16S ribosomal RNA. This chain is Small ribosomal subunit protein uS17, found in Bacillus pumilus (strain SAFR-032).